The following is a 208-amino-acid chain: Cysteine-rich protein 2 (208 aa).

The region spanning 5 to 57 (CPKCDKTVYFAEKVSSLGKDWHKFCLKCERCNKTLTPGGHAEHDGKPFCHKPC) is the LIM zinc-binding 1 domain. At Lys-23 the chain carries N6-acetyllysine. The residue at position 104 (Ser-104) is a Phosphoserine. An LIM zinc-binding 2 domain is found at 126–178 (CPRCNKRVYFAEKVTSLGKDWHRPCLRCERCSKTLTPGGHAEHDGQPYCHKPC). N6-acetyllysine occurs at positions 138 and 144.

Interacts with TGFB1I1. Expressed more abundantly in liver and kidney of females than that of males. Equally expressed in brain, lung and heart.

The sequence is that of Cysteine-rich protein 2 (Crip2) from Rattus norvegicus (Rat).